A 249-amino-acid chain; its full sequence is Small ribosomal subunit protein eS6 (249 aa).

Lys-14 is covalently cross-linked (Glycyl lysine isopeptide (Lys-Gly) (interchain with G-Cter in SUMO2)). Glu-35 carries the post-translational modification ADP-ribosyl glutamic acid. A (3R)-3-hydroxyarginine modification is found at Arg-137. Ser-148 is subject to Phosphoserine. Lys-211 bears the N6-acetyllysine mark. Basic and acidic residues predominate over residues 217-229 (MKEAKEKRQEQIA). The interval 217 to 249 (MKEAKEKRQEQIAKRRRLSSLRASTSKSESSQK) is disordered. A phosphoserine mark is found at Ser-235, Ser-236, Ser-240, Ser-242, Ser-244, and Ser-247. Positions 236–249 (SLRASTSKSESSQK) are enriched in low complexity.

Belongs to the eukaryotic ribosomal protein eS6 family. As to quaternary structure, component of the small ribosomal subunit. Part of the small subunit (SSU) processome, composed of more than 70 proteins and the RNA chaperone small nucleolar RNA (snoRNA) U3. Post-translationally, ribosomal protein S6 is the major substrate of protein kinases in eukaryote ribosomes. The phosphorylation is stimulated by growth factors, tumor promoting agents, and mitogens. It is dephosphorylated at growth arrest. Phosphorylated at Ser-235 and Ser-236 by RPS6KA1 and RPS6KA3; phosphorylation at these sites facilitates the assembly of the pre-initiation complex. Specifically hydroxylated (with R stereochemistry) at C-3 of Arg-137 by KDM8. In terms of processing, mono-ADP-ribosylation at Glu-35 by PARP16 inhibits polysome assembly and mRNA loading, thereby inhibiting protein translation.

It is found in the cytoplasm. The protein localises to the nucleus. The protein resides in the nucleolus. Its function is as follows. Component of the 40S small ribosomal subunit. Plays an important role in controlling cell growth and proliferation through the selective translation of particular classes of mRNA. Part of the small subunit (SSU) processome, first precursor of the small eukaryotic ribosomal subunit. During the assembly of the SSU processome in the nucleolus, many ribosome biogenesis factors, an RNA chaperone and ribosomal proteins associate with the nascent pre-rRNA and work in concert to generate RNA folding, modifications, rearrangements and cleavage as well as targeted degradation of pre-ribosomal RNA by the RNA exosome. The chain is Small ribosomal subunit protein eS6 (RPS6) from Oryctolagus cuniculus (Rabbit).